The following is a 283-amino-acid chain: MSAQLIDGKAVAEKLLEKVSAGVGERLAQGKRAPALAVILVGDNPASAVYVGSKKKACEKAGIRSVAYDLPASTSQQQLLEIIDGLNADDAVDGILVQLPLPEQIDPQAVIERIDPKKDVDGFHPYNVGRLAIKMPLMRPCTPRGVMTLLEEYGIDPKGKKAVIVGASNIVGRPQALEMLLARATVTVCHSATRNLAEEVAAADILVVGVGIPNFVKGEWVKPGAVVIDVGINRLDTGKLCGDVEFDAARERAGFITPVPGGVGPMTVATLLQNTLDSANLNA.

NADP(+) contacts are provided by residues 166 to 168 (GAS), Ser191, and Ile232.

It belongs to the tetrahydrofolate dehydrogenase/cyclohydrolase family. Homodimer.

It carries out the reaction (6R)-5,10-methylene-5,6,7,8-tetrahydrofolate + NADP(+) = (6R)-5,10-methenyltetrahydrofolate + NADPH. The enzyme catalyses (6R)-5,10-methenyltetrahydrofolate + H2O = (6R)-10-formyltetrahydrofolate + H(+). The protein operates within one-carbon metabolism; tetrahydrofolate interconversion. Its function is as follows. Catalyzes the oxidation of 5,10-methylenetetrahydrofolate to 5,10-methenyltetrahydrofolate and then the hydrolysis of 5,10-methenyltetrahydrofolate to 10-formyltetrahydrofolate. This chain is Bifunctional protein FolD, found in Chromobacterium violaceum (strain ATCC 12472 / DSM 30191 / JCM 1249 / CCUG 213 / NBRC 12614 / NCIMB 9131 / NCTC 9757 / MK).